Here is a 754-residue protein sequence, read N- to C-terminus: 5-methyltetrahydropteroyltriglutamate--homocysteine methyltransferase (754 aa).

Residues 17-20 (RELK) and K117 each bind 5-methyltetrahydropteroyltri-L-glutamate. Residues 431–433 (IGS) and E484 each bind L-homocysteine. L-methionine is bound by residues 431–433 (IGS) and E484. 5-methyltetrahydropteroyltri-L-glutamate is bound by residues 515-516 (RC) and W561. Residue D599 coordinates L-homocysteine. D599 contacts L-methionine. E605 is a 5-methyltetrahydropteroyltri-L-glutamate binding site. Residues H641, C643, and E665 each coordinate Zn(2+). Residue H694 is the Proton donor of the active site. Residue C726 coordinates Zn(2+).

Belongs to the vitamin-B12 independent methionine synthase family. Requires Zn(2+) as cofactor.

The catalysed reaction is 5-methyltetrahydropteroyltri-L-glutamate + L-homocysteine = tetrahydropteroyltri-L-glutamate + L-methionine. Its pathway is amino-acid biosynthesis; L-methionine biosynthesis via de novo pathway; L-methionine from L-homocysteine (MetE route): step 1/1. In terms of biological role, catalyzes the transfer of a methyl group from 5-methyltetrahydrofolate to homocysteine resulting in methionine formation. This Pectobacterium atrosepticum (strain SCRI 1043 / ATCC BAA-672) (Erwinia carotovora subsp. atroseptica) protein is 5-methyltetrahydropteroyltriglutamate--homocysteine methyltransferase.